The following is a 640-amino-acid chain: 1,4-alpha-glucan branching enzyme GlgB (640 aa).

Asp-318 (nucleophile) is an active-site residue. Glu-371 (proton donor) is an active-site residue.

This sequence belongs to the glycosyl hydrolase 13 family. GlgB subfamily. In terms of assembly, monomer.

The catalysed reaction is Transfers a segment of a (1-&gt;4)-alpha-D-glucan chain to a primary hydroxy group in a similar glucan chain.. It functions in the pathway glycan biosynthesis; glycogen biosynthesis. Its function is as follows. Catalyzes the formation of the alpha-1,6-glucosidic linkages in glycogen by scission of a 1,4-alpha-linked oligosaccharide from growing alpha-1,4-glucan chains and the subsequent attachment of the oligosaccharide to the alpha-1,6 position. The polypeptide is 1,4-alpha-glucan branching enzyme GlgB (Francisella tularensis subsp. novicida (strain U112)).